Consider the following 140-residue polypeptide: 6,7-dimethyl-8-ribityllumazine synthase (140 aa).

5-amino-6-(D-ribitylamino)uracil is bound by residues Phe11, 42 to 44 (ALE), and 66 to 68 (VVI). 71–72 (ET) contributes to the (2S)-2-hydroxy-3-oxobutyl phosphate binding site. His74 (proton donor) is an active-site residue. Residue Asn98 coordinates 5-amino-6-(D-ribitylamino)uracil. (2S)-2-hydroxy-3-oxobutyl phosphate is bound at residue Arg112.

It belongs to the DMRL synthase family.

It catalyses the reaction (2S)-2-hydroxy-3-oxobutyl phosphate + 5-amino-6-(D-ribitylamino)uracil = 6,7-dimethyl-8-(1-D-ribityl)lumazine + phosphate + 2 H2O + H(+). The protein operates within cofactor biosynthesis; riboflavin biosynthesis; riboflavin from 2-hydroxy-3-oxobutyl phosphate and 5-amino-6-(D-ribitylamino)uracil: step 1/2. In terms of biological role, catalyzes the formation of 6,7-dimethyl-8-ribityllumazine by condensation of 5-amino-6-(D-ribitylamino)uracil with 3,4-dihydroxy-2-butanone 4-phosphate. This is the penultimate step in the biosynthesis of riboflavin. In Erythrobacter litoralis (strain HTCC2594), this protein is 6,7-dimethyl-8-ribityllumazine synthase.